The following is a 207-amino-acid chain: Glycerol-3-phosphate acyltransferase (207 aa).

The next 6 membrane-spanning stretches (helical) occupy residues 8–28 (NIVF…LILA), 64–84 (LGIA…LVGI), 92–112 (TLWA…YLGL), 122–142 (LGVY…VWIV), 154–174 (SLLG…GLGI), and 176–196 (SNIP…PNIV).

Belongs to the PlsY family. In terms of assembly, probably interacts with PlsX.

The protein resides in the cell inner membrane. It carries out the reaction an acyl phosphate + sn-glycerol 3-phosphate = a 1-acyl-sn-glycero-3-phosphate + phosphate. It participates in lipid metabolism; phospholipid metabolism. Catalyzes the transfer of an acyl group from acyl-phosphate (acyl-PO(4)) to glycerol-3-phosphate (G3P) to form lysophosphatidic acid (LPA). This enzyme utilizes acyl-phosphate as fatty acyl donor, but not acyl-CoA or acyl-ACP. This is Glycerol-3-phosphate acyltransferase from Aliarcobacter butzleri (strain RM4018) (Arcobacter butzleri).